A 410-amino-acid chain; its full sequence is E3 ubiquitin-protein ligase MARCHF4 (410 aa).

The first 18 residues, 1–18, serve as a signal peptide directing secretion; that stretch reads MLMPLCGLLWWWWCCCSG. Positions 92-136 are disordered; that stretch reads GPREVVGREPPPVPPPPPLPPSSVEDDWGGPATEPPASLLSSASS. A compositionally biased stretch (pro residues) spans 100–112; sequence EPPPVPPPPPLPP. Over residues 126–136 the composition is skewed to low complexity; it reads PPASLLSSASS. The RING-CH-type zinc finger occupies 155-215; that stretch reads DSGMRTPLCR…ELCYYKYHVI (61 aa). Residues cysteine 163, cysteine 166, cysteine 179, cysteine 181, histidine 189, cysteine 192, cysteine 205, and cysteine 208 each contribute to the Zn(2+) site. Transmembrane regions (helical) follow at residues 238-258 and 272-292; these read VAAA…LIWS and LFQI…GLII. 2 disordered regions span residues 324-372 and 390-410; these read EDQK…SGPL and PHEQ…VTTV. The segment covering 333-346 has biased composition (polar residues); sequence NPRTSSSTQANIPS. Positions 352–366 are enriched in low complexity; it reads AGTPAPEQGPAQAAG.

In terms of tissue distribution, expressed in brain and placenta.

Its subcellular location is the golgi apparatus membrane. It catalyses the reaction S-ubiquitinyl-[E2 ubiquitin-conjugating enzyme]-L-cysteine + [acceptor protein]-L-lysine = [E2 ubiquitin-conjugating enzyme]-L-cysteine + N(6)-ubiquitinyl-[acceptor protein]-L-lysine.. It participates in protein modification; protein ubiquitination. In terms of biological role, E3 ubiquitin-protein ligase that may mediate ubiquitination of MHC-I and CD4, and promote their subsequent endocytosis and sorting to lysosomes via multivesicular bodies. E3 ubiquitin ligases accept ubiquitin from an E2 ubiquitin-conjugating enzyme in the form of a thioester and then directly transfer the ubiquitin to targeted substrates. In Homo sapiens (Human), this protein is E3 ubiquitin-protein ligase MARCHF4.